Consider the following 562-residue polypeptide: Arginine--tRNA ligase (562 aa).

The short motif at 122 to 132 (PNIAKPISMGH) is the 'HIGH' region element.

This sequence belongs to the class-I aminoacyl-tRNA synthetase family. In terms of assembly, monomer.

It localises to the cytoplasm. The catalysed reaction is tRNA(Arg) + L-arginine + ATP = L-arginyl-tRNA(Arg) + AMP + diphosphate. This chain is Arginine--tRNA ligase, found in Pediococcus pentosaceus (strain ATCC 25745 / CCUG 21536 / LMG 10740 / 183-1w).